The primary structure comprises 140 residues: NTF2-related export protein 1 (140 aa).

Position 2 is an N-acetylalanine (A2). The NTF2 domain occupies 16–135; sequence AAEEFVNVYY…WKIASDCFRF (120 aa).

In terms of assembly, heterodimer with NXF1. Forms a complex with RANGAP1, RANBP2/NUP358 and NXF1. Interacts (via NTF2 domain) with NXF1. Stabilizes the NTF2 domain of NXF1 by heterodimerization. The formation of NXF1-NXT1 heterodimers is required for the NXF1-mediated nuclear mRNA export. Preferentially binds Ran-GTP. Associates with NXF2, NXF3 and NXF5. Does not bind nucleoporins (NPC) directly, its association to NPC is mediated by NXF1.

Its subcellular location is the nucleus. It localises to the nucleus speckle. The protein localises to the cytoplasm. Stimulator of protein export for NES-containing proteins. Also plays a role in the nuclear export of U1 snRNA, tRNA, and mRNA. The NXF1-NXT1 heterodimer is involved in the export of HSP70 mRNA in conjunction with ALYREF/THOC4 and THOC5. This chain is NTF2-related export protein 1 (NXT1), found in Bos taurus (Bovine).